Consider the following 208-residue polypeptide: TM2 domain-containing protein 1 (208 aa).

The signal sequence occupies residues 1 to 37 (MAAAWPAGRASPAAGPPGLLRTLWLVTVAAGHCGAAA). At 38–129 (SGAVGGEETP…YSYKVAVALS (92 aa)) the chain is on the extracellular side. 3 N-linked (GlcNAc...) asparagine glycosylation sites follow: asparagine 73, asparagine 76, and asparagine 97. One can recognise a TM2 domain in the interval 119 to 167 (GYSYKVAVALSLFLGWLGADRFYLGYPALGLLKFCTVGFCGIGSLIDFI). Residues 130–150 (LFLGWLGADRFYLGYPALGLL) form a helical membrane-spanning segment. Topologically, residues 151 to 154 (KFCT) are cytoplasmic. Residues 155 to 175 (VGFCGIGSLIDFILISMQIVG) traverse the membrane as a helical segment. The Extracellular portion of the chain corresponds to 176 to 208 (PSDGSSYIIDYYGTRLTRLSITNETFRKTQLYP). Asparagine 198 carries N-linked (GlcNAc...) asparagine glycosylation.

The protein belongs to the TM2 family. Interacts with APP beta-APP42 (amyloid-beta protein 42). Post-translationally, N-glycosylated.

It localises to the membrane. Functionally, may participate in amyloid-beta-induced apoptosis via its interaction with beta-APP42. The chain is TM2 domain-containing protein 1 (Tm2d1) from Mus musculus (Mouse).